A 1452-amino-acid chain; its full sequence is Receptor-type tyrosine-protein phosphatase mu (1452 aa).

A signal peptide spans 1-20 (MRGLGTCLATLAGLLLTAAG). The Extracellular segment spans residues 21–742 (ETFSGGCLFD…PEKQTDHTVK (722 aa)). Residues 22–184 (TFSGGCLFDE…VKVLGHPCTR (163 aa)) enclose the MAM domain. Cysteines 27 and 36 form a disulfide. Asn72, Asn92, Asn131, and Asn249 each carry an N-linked (GlcNAc...) asparagine glycan. Intrachain disulfides connect Cys96/Cys182 and Cys206/Cys260. Residues 186–277 (PHFLRIQNVE…VGISNYAELV (92 aa)) enclose the Ig-like C2-type domain. Fibronectin type-III domains lie at 284–379 (PIAP…CADP), 382–480 (GPRK…TDED), 482–587 (PGAV…SAPS), and 589–671 (PAYE…DSLQ). Asn406, Asn414, Asn454, Asn534, Asn544, Asn598, Asn651, and Asn681 each carry an N-linked (GlcNAc...) asparagine glycan. A helical transmembrane segment spans residues 743-764 (IAGVIAGILLFVIIFLGVVLVM). Residues 765 to 1452 (KKRKLAKKRK…EVALEYLNSG (688 aa)) lie on the Cytoplasmic side of the membrane. Phosphoserine is present on Ser821. Tyrosine-protein phosphatase domains are found at residues 900–1154 (FKEE…ILEA) and 1186–1448 (IKEE…ALEY). Substrate is bound by residues Asp1063, 1095–1101 (CSAGAGR), and Gln1139. Cys1095 functions as the Phosphocysteine intermediate in the catalytic mechanism. The active-site Phosphocysteine intermediate is Cys1389.

This sequence belongs to the protein-tyrosine phosphatase family. Receptor class 2B subfamily. Homodimer.

The protein resides in the cell membrane. The catalysed reaction is O-phospho-L-tyrosyl-[protein] + H2O = L-tyrosyl-[protein] + phosphate. Its function is as follows. Receptor protein-tyrosine phosphatase that mediates homotypic cell-cell interactions and plays a role in adipogenic differentiation via modulation of p120 catenin/CTNND1 phosphorylation. Promotes CTNND1 dephosphorylation and prevents its cytoplasmic localization where it inhibits SLC2A4 membrane trafficking. In turn, SLC2A4 is directed to the plasma membrane and performs its glucose transporter function. This chain is Receptor-type tyrosine-protein phosphatase mu (PTPRM), found in Homo sapiens (Human).